The following is a 260-amino-acid chain: Hydroxypyruvate/pyruvate aldolase Bphyt_0320 (260 aa).

Histidine 48 serves as the catalytic Proton acceptor. A divalent metal cation is bound by residues glutamate 157 and aspartate 183.

The protein belongs to the HpcH/HpaI aldolase family. The cofactor is Mn(2+). It depends on Mg(2+) as a cofactor. Requires Co(2+) as cofactor.

It catalyses the reaction D-glyceraldehyde + 3-hydroxypyruvate = 2-dehydro-D-gluconate. The catalysed reaction is D-glyceraldehyde + pyruvate = 2-dehydro-3-deoxy-L-galactonate. It carries out the reaction 2-dehydro-3-deoxy-D-gluconate = D-glyceraldehyde + pyruvate. In terms of biological role, aldolase which can catalyze in vitro the aldolisation reaction between hydroxypyruvate (HPA) or pyruvate (PA) and D-glyceraldehyde (D-GA). The condensation of hydroxypyruvate and D-glyceraldehyde produces 2-dehydro-D-gluconate. The condensation of pyruvate and D-glyceraldehyde produces 2-dehydro-3-deoxy-L-galactonate as the major product and 2-dehydro-3-deoxy-D-gluconate. Also catalyzes the retro-aldol type decarboxylation of oxaloacetate, a general property of known pyruvate aldolases. This Paraburkholderia phytofirmans (strain DSM 17436 / LMG 22146 / PsJN) (Burkholderia phytofirmans) protein is Hydroxypyruvate/pyruvate aldolase Bphyt_0320.